A 211-amino-acid polypeptide reads, in one-letter code: MADCVIRDWQGKEAGKATLDLKVAKETTANDLMHRAVLRQQAHARQGTASTLTRSEVRGGGRKPYKQKGTGRARQGSIRTPLRPGGGIVFGPKPRTYNLAMNRKERRLALRTALMARVEDVTVVKDFGTSLEAPKTKEITDALGRLGIAADAKVLIVLTEPSDVVRRSVRNLEKVKLIAANQLNVFDLLHANALVLGEDALATIQEVYGDD.

The disordered stretch occupies residues 41 to 87; that stretch reads QAHARQGTASTLTRSEVRGGGRKPYKQKGTGRARQGSIRTPLRPGGG. Residues 60-71 show a composition bias toward basic residues; the sequence is GGRKPYKQKGTG.

This sequence belongs to the universal ribosomal protein uL4 family. Part of the 50S ribosomal subunit.

Its function is as follows. One of the primary rRNA binding proteins, this protein initially binds near the 5'-end of the 23S rRNA. It is important during the early stages of 50S assembly. It makes multiple contacts with different domains of the 23S rRNA in the assembled 50S subunit and ribosome. In terms of biological role, forms part of the polypeptide exit tunnel. In Parasynechococcus marenigrum (strain WH8102), this protein is Large ribosomal subunit protein uL4.